The following is a 1149-amino-acid chain: Nitric oxide synthase, inducible (1149 aa).

Positions K22–H83 are disordered. A DINNN-motif; mediates interaction with SPSB1, SPSB2 and SPSB4 motif is present at residues D23–N27. The span at K50 to G61 shows a compositional bias: polar residues. The Zn(2+) site is built by C109 and C114. (6R)-L-erythro-5,6,7,8-tetrahydrobiopterin is bound at residue S117. Residue C199 coordinates heme b. L-arginine-binding residues include Q262, W371, Y372, and E376. (6R)-L-erythro-5,6,7,8-tetrahydrobiopterin-binding residues include R380, I461, W462, and F475. Y490 lines the heme b pocket. The calmodulin-binding stretch occupies residues F514 to S534. In terms of domain architecture, Flavodoxin-like spans A538 to F676. Residues T544, E545, T546, K548, and S549 each contribute to the FMN site. The residue at position 574 (Y574) is a Phosphotyrosine. FMN-binding residues include S590, T591, S627, R632, C634, E660, and Q664. Residues T729–P969 form the FAD-binding FR-type domain. R749 lines the NADP(+) pocket. FAD contacts are provided by H771, R905, Y907, S908, T923, and A925. T928 is a binding site for NADP(+). Positions 929, 942, 943, and 944 each coordinate FAD. Residues T983, R1016, S1045, R1046, K1052, Y1054, Q1056, and D1089 each coordinate NADP(+).

It belongs to the NOS family. In terms of assembly, homodimer. Interacts with NHERF1. Interacts with GAPDH; induced by oxidatively-modified low-densitity lipoprotein (LDL(ox)). Interacts with S100A8 and S100A9 to form the iNOS-S100A8/9 transnitrosylase complex. Interacts with SPSB1, SPSB2 and SPSB4. Interacts with ELOC and CUL5 in the presence of SPSB1 or SPSB2 or SPSB4. Forms a complex with ASL, ASS1 and HSP90AA1; the complex regulates cell-autonomous L-arginine synthesis and citrulline recycling while channeling extracellular L-arginine to nitric oxide synthesis pathway. Requires heme b as cofactor. It depends on FAD as a cofactor. FMN serves as cofactor. The cofactor is (6R)-L-erythro-5,6,7,8-tetrahydrobiopterin. In terms of processing, polyubiquitinated; mediated by SPSB1, SPSB2 and SPSB4, leading to proteasomal degradation. Expressed in the lung and colon. Not detected in the heart, aorta, liver, kidney, and spleen.

It localises to the cytoplasm. Its subcellular location is the cytosol. The catalysed reaction is 2 L-arginine + 3 NADPH + 4 O2 + H(+) = 2 L-citrulline + 2 nitric oxide + 3 NADP(+) + 4 H2O. With respect to regulation, regulated by calcium/calmodulin. In terms of biological role, produces nitric oxide (NO) which is a messenger molecule with diverse functions throughout the body. In macrophages, NO mediates tumoricidal and bactericidal actions. Also has nitrosylase activity and mediates cysteine S-nitrosylation of cytoplasmic target proteins such PTGS2/COX2. As component of the iNOS-S100A8/9 transnitrosylase complex involved in the selective inflammatory stimulus-dependent S-nitrosylation of GAPDH implicated in regulation of the GAIT complex activity and probably multiple targets including ANXA5, EZR, MSN and VIM. Involved in inflammation, enhances the synthesis of pro-inflammatory mediators such as IL6 and IL8. The sequence is that of Nitric oxide synthase, inducible (NOS2) from Cavia porcellus (Guinea pig).